We begin with the raw amino-acid sequence, 307 residues long: Protein FAM76A (307 aa).

2 disordered regions span residues glutamine 142 to threonine 195 and lysine 287 to proline 307. Residues serine 161–asparagine 182 show a composition bias toward polar residues. Residues isoleucine 217–glutamate 299 are a coiled coil.

This sequence belongs to the FAM76 family.

This is Protein FAM76A (FAM76A) from Bos taurus (Bovine).